The sequence spans 268 residues: Sterol uptake protein 2 (268 aa).

Belongs to the SUT1 family.

It localises to the nucleus. In terms of biological role, putative transcription factor involved in the regulation of the activity of the cAMP/protein kinase A pathway. Involved in sterol uptake. With SUT1, positively regulates mating by repressing the expression of the mating inhibitors NCE102, PRR2 and RHO5 in response to pheromone. The chain is Sterol uptake protein 2 from Saccharomyces cerevisiae (strain ATCC 204508 / S288c) (Baker's yeast).